Consider the following 210-residue polypeptide: Translation initiation factor IF-3 (210 aa).

The disordered stretch occupies residues 169–210; it reads APKQAPAPKKERTEESAEKAGSAGETEPVPAASAAAEAPANV. Residues 176–186 are compositionally biased toward basic and acidic residues; sequence PKKERTEESAE. The segment covering 187–210 has biased composition (low complexity); that stretch reads KAGSAGETEPVPAASAAAEAPANV.

Belongs to the IF-3 family. In terms of assembly, monomer.

The protein resides in the cytoplasm. Functionally, IF-3 binds to the 30S ribosomal subunit and shifts the equilibrium between 70S ribosomes and their 50S and 30S subunits in favor of the free subunits, thus enhancing the availability of 30S subunits on which protein synthesis initiation begins. This chain is Translation initiation factor IF-3, found in Deinococcus deserti (strain DSM 17065 / CIP 109153 / LMG 22923 / VCD115).